The primary structure comprises 354 residues: Ferrochelatase (354 aa).

2 residues coordinate Fe cation: histidine 204 and glutamate 306.

This sequence belongs to the ferrochelatase family.

It is found in the cytoplasm. The catalysed reaction is heme b + 2 H(+) = protoporphyrin IX + Fe(2+). Its pathway is porphyrin-containing compound metabolism; protoheme biosynthesis; protoheme from protoporphyrin-IX: step 1/1. Catalyzes the ferrous insertion into protoporphyrin IX. The chain is Ferrochelatase from Coxiella burnetii (strain RSA 493 / Nine Mile phase I).